A 316-amino-acid polypeptide reads, in one-letter code: Cysteine synthase (316 aa).

Hydrogen sulfide contacts are provided by Asn-7 and Arg-35. Lys-42 bears the N6-(pyridoxal phosphate)lysine mark. Residues Asn-72 and 177–181 (GTGGS) contribute to the pyridoxal 5'-phosphate site. Leu-268 provides a ligand contact to hydrogen sulfide. Pyridoxal 5'-phosphate is bound at residue Ser-272.

The protein belongs to the cysteine synthase/cystathionine beta-synthase family. In terms of assembly, homodimer. Pyridoxal 5'-phosphate is required as a cofactor.

It catalyses the reaction O-acetyl-L-serine + hydrogen sulfide = L-cysteine + acetate. It participates in amino-acid biosynthesis; L-cysteine biosynthesis; L-cysteine from L-serine: step 2/2. This Haemophilus influenzae (strain ATCC 51907 / DSM 11121 / KW20 / Rd) protein is Cysteine synthase (cysK).